The sequence spans 50 residues: Photosystem I reaction center subunit IX (50 aa).

The helical transmembrane segment at Y7–I27 threads the bilayer.

The protein belongs to the PsaJ family.

It is found in the plastid. The protein resides in the chloroplast thylakoid membrane. In terms of biological role, may help in the organization of the PsaE and PsaF subunits. The sequence is that of Photosystem I reaction center subunit IX from Pinus koraiensis (Korean pine).